Consider the following 282-residue polypeptide: Cyclic AMP-dependent transcription factor ATF-5 (282 aa).

The segment at 1–21 (MSLLATLGLELDRALLPASGL) is required for protein stabilization induced by IL1B. At Lys-29 the chain carries N6-acetyllysine; by EP300. Disordered stretches follow at residues 116–152 (FLDAPPLPPPSPPPLPPPPLPPAPSLPLSLPSFDLPQ) and 173–238 (EEVG…ALEG). The tract at residues 119–217 (APPLPPPSPP…GDRKQKKRDQ (99 aa)) is interaction with PTP4A1. Pro residues predominate over residues 120–140 (PPLPPPSPPPLPPPPLPPAPS). Residues 141–150 (LPLSLPSFDL) are compositionally biased toward low complexity. The span at 178–194 (PPLPPPQQPPPPSPPQP) shows a compositional bias: pro residues. Positions 208–271 (GDRKQKKRDQ…QYVKDLLIEV (64 aa)) constitute a bZIP domain. The tract at residues 210–230 (RKQKKRDQNKSAALRYRQRKR) is basic motif. Positions 236-250 (LEGECQGLEARNREL) are leucine-zipper. Position 256 is a phosphoserine (Ser-256).

It belongs to the bZIP family. In terms of assembly, binds DNA as a dimer. Interacts with PTP4A1/PRL-1. Interacts with CCND3, but not with CCND1 or CCND2. Interacts with HSPA1A or HSPA1B; the interaction protects ATF5 from degradation via proteasome-dependent and caspase-dependent processes. Interacts (via C-terminal region) with NPM1 (via C-terminal region); the interaction leads to loss of association between HSPA1A or HSPA1B and ATF5 and promotes ATF5 degradation via proteasome-dependent and caspase-dependent processes. Interacts with NLK; the interaction stabilizes ATF5 at the protein level in a kinase-independent manner. Interacts with alpha-tubulin, gamma-tubulin members TUBGCP2 and TUBGCP4, PCNT; the ATF5:PCNT:polyglutamylated tubulin (PGT) tripartite unites the mother centriole and the pericentriolar material (PCM) in the centrosome. Interacts with CEBPB and EP300; EP300 is required for ATF5 and CEBPB interaction and DNA binding. In terms of processing, ubiquitinated by CDC34 and UBE2B in order to be degraded by the proteasome. Cisplatin inhibits ubiquitination and proteasome-mediated degradation by inhibiting the interaction with CDC34. Ubiquitination and degradation by the proteasome are inhibited by NLK in a kinase-independent manner. Phosphorylated by NLK, probably at Ser-92, Thr-94, Ser-126 and Ser-190. Post-translationally, acetylated at Lys-29 by EP300, the acetylation enhances the interaction with CEBPB, DNA-binding and transactivation activity. As to expression, widely expressed with higher expression levels in liver.

It is found in the cytoplasm. The protein localises to the nucleus. It localises to the cytoskeleton. Its subcellular location is the microtubule organizing center. The protein resides in the centrosome. Functionally, transcription factor that either stimulates or represses gene transcription through binding of different DNA regulatory elements such as cAMP response element (CRE) (consensus: 5'-GTGACGT[AC][AG]-3'), ATF5-specific response element (ARE) (consensus: 5'-C[CT]TCT[CT]CCTT[AT]-3') but also the amino acid response element (AARE), present in many viral and cellular promoters. Critically involved, often in a cell type-dependent manner, in cell survival, proliferation, and differentiation. Its transcriptional activity is enhanced by CCND3 and slightly inhibited by CDK4. Important regulator of the cerebral cortex formation, functions in cerebral cortical neuroprogenitor cells to maintain proliferation and to block differentiation into neurons. Must be down-regulated in order for such cells to exit the cycle and differentiate. Participates in the pathways by which SHH promotes cerebellar granule neuron progenitor cells proliferation. Critical for survival of mature olfactory sensory neurons (OSN), directs expression of OSN-specific genes. May be involved in osteogenic differentiation. Promotes cell proliferation and survival by inducing the expression of EGR1 sinergistically with ELK1. Once acetylated by EP300, binds to ARE sequences on target genes promoters, such as BCL2 and EGR1. Plays an anti-apoptotic role through the transcriptional regulation of BCL2, this function seems to be cell type-dependent. Cooperates with NR1I3/CAR in the transcriptional activation of CYP2B6 in liver. In hepatic cells, represses CRE-dependent transcription and inhibits proliferation by blocking at G2/M phase. May act as a negative regulator of IL1B transduction pathway in liver. Upon IL1B stimulus, cooperates with NLK to activate the transactivation activity of C/EBP subfamily members. Besides its function of transcription factor, acts as a cofactor of CEBPB to activate CEBPA and promote adipocyte differentiation. Regulates centrosome dynamics in a cell-cycle- and centriole-age-dependent manner. Forms 9-foci symmetrical ring scaffold around the mother centriole to control centrosome function and the interaction between centrioles and pericentriolar material. The polypeptide is Cyclic AMP-dependent transcription factor ATF-5 (ATF5) (Homo sapiens (Human)).